The chain runs to 1138 residues: BMP-2-inducible protein kinase (1138 aa).

Serine 13 carries the post-translational modification Phosphoserine. The 266-residue stretch at 48–313 (VTLEESLAEG…DIFQVSYFAF (266 aa)) folds into the Protein kinase domain. Residues 54–62 (LAEGGFSTV) and lysine 76 contribute to the ATP site. Aspartate 177 functions as the Proton acceptor in the catalytic mechanism. Disordered regions lie at residues 355–435 (TDTI…RVLQ), 638–831 (NRLG…PADA), and 906–1018 (PRSV…EFLT). Polar residues predominate over residues 358–390 (IGPTETSIAPRQRPKANSTAATSSVLTIQSSAT). Residues 417-435 (VLMVQGPPQQPPQQHRVLQ) are compositionally biased toward low complexity. Serine 676 carries the phosphoserine modification. Positions 684–701 (HSPNQKSITANLTKNGGS) are enriched in polar residues. Residues 706–715 (KDQRAGKKTS) show a composition bias toward basic and acidic residues. A phosphoserine mark is found at serine 733, serine 806, and serine 807. Positions 787-813 (DKHSSDSECEQAKTKRGDTSSLRRDKP) are enriched in basic and acidic residues. Phosphothreonine is present on threonine 819. Serine 908 carries the post-translational modification Phosphoserine. The segment covering 915-926 (TPFQPFSVSASK) has biased composition (polar residues). The span at 951-965 (VKQRSLQKLSSRQRR) shows a compositional bias: basic residues. A phosphoserine mark is found at serine 1010, serine 1012, serine 1013, serine 1020, serine 1022, serine 1087, and serine 1091. Positions 1117 to 1138 (TPQQSQPVELDPFGAAPFPSKQ) are disordered.

The protein belongs to the protein kinase superfamily. Ser/Thr protein kinase family. Autophosphorylated. Expressed in osteocytes and osteoblasts.

It is found in the nucleus. It carries out the reaction L-seryl-[protein] + ATP = O-phospho-L-seryl-[protein] + ADP + H(+). It catalyses the reaction L-threonyl-[protein] + ATP = O-phospho-L-threonyl-[protein] + ADP + H(+). Its function is as follows. May be involved in osteoblast differentiation. The chain is BMP-2-inducible protein kinase (Bmp2k) from Mus musculus (Mouse).